The primary structure comprises 286 residues: Aquaporin PIP1-3 (286 aa).

Position 1 is an N-acetylmethionine (Met1). The disordered stretch occupies residues 1–33 (MEGKEEDVRVGANKFPERQPIGTSAQTDKDYKE). Topologically, residues 1–54 (MEGKEEDVRVGANKFPERQPIGTSAQTDKDYKEPPPAPFFEPGELSSWSFYRAG) are cytoplasmic. A helical membrane pass occupies residues 55–75 (IAEFIATFLFLYITVLTVMGV). Residues 76-81 (KRAPNM) lie on the Extracellular side of the membrane. The chain crosses the membrane as a helical span at residues 82–102 (CASVGIQGIAWAFGGMIFALV). Topologically, residues 103–132 (YCTAGISGGHINPAVTFGLFLARKLSLTRA) are cytoplasmic. Residues 114–116 (NPA) carry the NPA 1 motif. The helical transmembrane segment at 133 to 153 (VFYIVMQCLGAICGAGVVKGF) threads the bilayer. Residues 154–174 (QPNPYQTLGGGANTVAHGYTK) are Extracellular-facing. A helical membrane pass occupies residues 175 to 195 (GSGLGAEIIGTFVLVYTVFSA). At 196–208 (TDAKRSARDSHVP) the chain is on the cytoplasmic side. Residues 209 to 229 (ILAPLPIGFAVFLVHLATIPI) traverse the membrane as a helical segment. The Extracellular segment spans residues 230–256 (TGTGINPARSLGAAIIYNKDHAWDDHW). The NPA 2 signature appears at 235–237 (NPA). Residues 257–277 (IFWVGPFIGAALAALYHQLVI) form a helical membrane-spanning segment. Residues 278-286 (RAIPFKSRS) lie on the Cytoplasmic side of the membrane. The residue at position 284 (Ser284) is a Phosphoserine.

Belongs to the MIP/aquaporin (TC 1.A.8) family. PIP (TC 1.A.8.11) subfamily. In terms of tissue distribution, expressed in roots, above ground, ripening fruit, flower buds, green siliques and senescing leaves.

It localises to the cell membrane. Functionally, water channel required to facilitate the transport of water across cell membrane. Its function is impaired by Hg(2+). The protein is Aquaporin PIP1-3 (PIP1-3) of Arabidopsis thaliana (Mouse-ear cress).